The chain runs to 183 residues: Negative modulator of initiation of replication (183 aa).

Residues 90–91 are interaction with DNA; that stretch reads AV.

The protein belongs to the SeqA family. In terms of assembly, homodimer. Polymerizes to form helical filaments.

Its subcellular location is the cytoplasm. Functionally, negative regulator of replication initiation, which contributes to regulation of DNA replication and ensures that replication initiation occurs exactly once per chromosome per cell cycle. Binds to pairs of hemimethylated GATC sequences in the oriC region, thus preventing assembly of replication proteins and re-initiation at newly replicated origins. Repression is relieved when the region becomes fully methylated. This chain is Negative modulator of initiation of replication, found in Shewanella oneidensis (strain ATCC 700550 / JCM 31522 / CIP 106686 / LMG 19005 / NCIMB 14063 / MR-1).